The primary structure comprises 256 residues: Thiazole synthase (256 aa).

Lysine 97 acts as the Schiff-base intermediate with DXP in catalysis. Residues glycine 158, 184–185, and 206–207 each bind 1-deoxy-D-xylulose 5-phosphate; these read AG and NT.

This sequence belongs to the ThiG family. Homotetramer. Forms heterodimers with either ThiH or ThiS.

Its subcellular location is the cytoplasm. The catalysed reaction is [ThiS sulfur-carrier protein]-C-terminal-Gly-aminoethanethioate + 2-iminoacetate + 1-deoxy-D-xylulose 5-phosphate = [ThiS sulfur-carrier protein]-C-terminal Gly-Gly + 2-[(2R,5Z)-2-carboxy-4-methylthiazol-5(2H)-ylidene]ethyl phosphate + 2 H2O + H(+). The protein operates within cofactor biosynthesis; thiamine diphosphate biosynthesis. In terms of biological role, catalyzes the rearrangement of 1-deoxy-D-xylulose 5-phosphate (DXP) to produce the thiazole phosphate moiety of thiamine. Sulfur is provided by the thiocarboxylate moiety of the carrier protein ThiS. In vitro, sulfur can be provided by H(2)S. The sequence is that of Thiazole synthase from Flavobacterium psychrophilum (strain ATCC 49511 / DSM 21280 / CIP 103535 / JIP02/86).